We begin with the raw amino-acid sequence, 46 residues long: Iota-conotoxin-like R11.17 (46 aa).

Proline 2 and proline 11 each carry 4-hydroxyproline. Cystine bridges form between cysteine 5-cysteine 19, cysteine 12-cysteine 22, cysteine 18-cysteine 27, and cysteine 21-cysteine 38. Proline 29 is subject to 4-hydroxyproline. A D-phenylalanine modification is found at phenylalanine 44.

It belongs to the conotoxin I1 superfamily. Expressed by the venom duct.

Its subcellular location is the secreted. Functionally, iota-conotoxins bind to voltage-gated sodium channels (Nav) and act as agonists by shifting the voltage-dependence of activation to more hyperpolarized levels. Produces general excitatory symptoms. This Conus radiatus (Rayed cone) protein is Iota-conotoxin-like R11.17.